Reading from the N-terminus, the 68-residue chain is Small ribosomal subunit protein bS18c (68 aa).

This sequence belongs to the bacterial ribosomal protein bS18 family. As to quaternary structure, part of the 30S ribosomal subunit.

The protein resides in the plastid. The protein localises to the chloroplast. This chain is Small ribosomal subunit protein bS18c (rps18), found in Cyanidium caldarium (Red alga).